The following is a 94-amino-acid chain: MESIKLSQKAEEEIVNAARMAALSNLTEKSQNLITLEDIAIYFGRHYQTVAKIISKLPNFPKPVTPVTVDQQNSRPRYIAGEVVRWGRINAKPY.

This is an uncharacterized protein from Haemophilus influenzae (strain ATCC 51907 / DSM 11121 / KW20 / Rd).